Consider the following 483-residue polypeptide: Rhamnulokinase (483 aa).

Residue 11–15 (ASSGR) participates in ATP binding. Substrate is bound by residues glycine 79 and 234–236 (HDT). Aspartate 235 serves as the catalytic Proton acceptor. Position 257 (threonine 257) interacts with ATP. Position 294 (asparagine 294) interacts with substrate. Glutamine 302 is a binding site for ATP. Cysteine 352 and cysteine 369 are joined by a disulfide. Position 401 (glycine 401) interacts with ATP.

It belongs to the rhamnulokinase family. Mg(2+) is required as a cofactor.

The catalysed reaction is L-rhamnulose + ATP = L-rhamnulose 1-phosphate + ADP + H(+). Its pathway is carbohydrate degradation; L-rhamnose degradation; glycerone phosphate from L-rhamnose: step 2/3. Functionally, involved in the catabolism of L-rhamnose (6-deoxy-L-mannose). Catalyzes the transfer of the gamma-phosphate group from ATP to the 1-hydroxyl group of L-rhamnulose to yield L-rhamnulose 1-phosphate. This is Rhamnulokinase from Listeria monocytogenes serovar 1/2a (strain ATCC BAA-679 / EGD-e).